Reading from the N-terminus, the 141-residue chain is Protein NrdI (141 aa).

It belongs to the NrdI family.

Its function is as follows. Probably involved in ribonucleotide reductase function. This Bifidobacterium animalis subsp. lactis (strain AD011) protein is Protein NrdI.